An 89-amino-acid polypeptide reads, in one-letter code: Protein PerC (89 aa).

Transcriptional activator of eaeA/bfpA expression in enteropathogenic E.coli. In Escherichia coli O111:H-, this protein is Protein PerC (perC).